The chain runs to 474 residues: Proline--tRNA ligase (474 aa).

It belongs to the class-II aminoacyl-tRNA synthetase family. ProS type 3 subfamily. In terms of assembly, homodimer.

The protein localises to the cytoplasm. It carries out the reaction tRNA(Pro) + L-proline + ATP = L-prolyl-tRNA(Pro) + AMP + diphosphate. Its function is as follows. Catalyzes the attachment of proline to tRNA(Pro) in a two-step reaction: proline is first activated by ATP to form Pro-AMP and then transferred to the acceptor end of tRNA(Pro). The chain is Proline--tRNA ligase from Mycoplasma capricolum subsp. capricolum (strain California kid / ATCC 27343 / NCTC 10154).